The chain runs to 1098 residues: MTLQELVHKAASCYMDRVAVCFDECNNQLPVYYTYKTVVNAASELSNFLLLHCDFQGIREIGLYCQPGIDLPSWILGILQVPAAYVPIEPDSPPSLSTHFMKKCNLKYILVEKKQINKFKSFHETLLNYDTFTVEHNDLVLFRLHWKNTEVNLMLNDGKEKYEKEKIKSISSEHVNEEKAEEHMDLRLKHCLAYVLHTSGTTGIPKIVRVPHKCIVPNIQHFRVLFDITQEDVLFLASPLTFDPSVVEIFLALSSGASLLIVPTSVKLLPSKLASVLFSHHRVTVLQATPTLLRRFGSQLIKSTVLSATTSLRVLALGGEAFPSLTVLRSWRGEGNKTQIFNVYGITEVSSWATIYRIPEKTLNSTLKCELPVQLGFPLLGTVVEVRDTNGFTIQEGSGQVFLGGRNRVCFLDDEVTVPLGTMRATGDFVTVKDGEIFFLGRKDSQIKRHGKRLNIELVQQVAEELQQVESCAVTWYNQEKLILFMVSKDASVKEYIFKELQKYLPSHAVPDELVLIDSLPFTSHGKIDVSELNKIYLNYINLKSENKLSGKEDLWEKLQYLWKSTLNLPEDLLRVPDESLFLNSGGDSLKSIRLLSEIEKLVGTSVPGLLEIILSSSILEIYNHILQTVVPDEDVTFRKSCATKRKLSDINQEEASGTSLHQKAIMTFTCHNEINAFVVLSRGSQILSLNSTRFLTKLGHCSSACPSDSVSQTNIQNLKGLNSPVLIGKSKDPSCVAKVSEEGKPAIGTQKMELHVRWRSDTGKCVDASPLVVIPTFDKSSTTVYIGSHSHRMKAVDFYSGKVKWEQILGDRIESSACVSKCGNFIVVGCYNGLVYVLKSNSGEKYWMFTTEDAVKSSATMDPTTGLIYIGSHDQHAYALDIYRKKCVWKSKCGGTVFSSPCLNLIPHHLYFATLGGLLLAVNPATGNVIWKHSCGKPLFSSPQCCSQYICIGCVDGNLLCFTHFGEQVWQFSTSGPIFSSPCTSPSEQKIFFGSHDCFIYCCNMKGHLQWKFETTSRVYATPFAFHNYNGSNEMLLAAASTDGKVWILESQSGQLQSVYELPGEVFSSPVVLESMLIIGCRDNYVYCLDLLGGNQK.

ATP-binding positions include 198–206 (TSGTTGIPK), D428, R442, and K527. In terms of domain architecture, Carrier spans 553 to 630 (EDLWEKLQYL…EIYNHILQTV (78 aa)). At S589 the chain carries O-(pantetheine 4'-phosphoryl)serine. Residues S649 and S724 each carry the phosphoserine modification.

Belongs to the ATP-dependent AMP-binding enzyme family. In terms of tissue distribution, ubiquitously expressed in adult tissues.

Functionally, covalently binds beta-alanine in an ATP-dependent manner to form a thioester bond with its phosphopantetheine group and transfers it to an, as yet, unknown acceptor. May be required for a post-translational protein modification or for post-transcriptional modification of an RNA. This Homo sapiens (Human) protein is Beta-alanine-activating enzyme (AASDH).